Here is a 75-residue protein sequence, read N- to C-terminus: MPIIGVPRCLIKPFSVPVTFPFSVKKNIRILDLDPRTEAYCLSLNSVCFKRLPRRKYFHLLNSYNIKRVLGVVYC.

Belongs to the UPF0377 family.

The protein is Putative UPF0377 protein YAL067W-A of Saccharomyces cerevisiae (strain ATCC 204508 / S288c) (Baker's yeast).